Reading from the N-terminus, the 293-residue chain is Pyridoxal 5'-phosphate synthase subunit PdxS (293 aa).

Asp-23 is a D-ribose 5-phosphate binding site. Lys-80 serves as the catalytic Schiff-base intermediate with D-ribose 5-phosphate. Gly-152 is a D-ribose 5-phosphate binding site. Arg-164 is a D-glyceraldehyde 3-phosphate binding site. D-ribose 5-phosphate contacts are provided by residues Gly-213 and 234–235 (GS).

This sequence belongs to the PdxS/SNZ family. In terms of assembly, in the presence of PdxT, forms a dodecamer of heterodimers.

The enzyme catalyses aldehydo-D-ribose 5-phosphate + D-glyceraldehyde 3-phosphate + L-glutamine = pyridoxal 5'-phosphate + L-glutamate + phosphate + 3 H2O + H(+). Its pathway is cofactor biosynthesis; pyridoxal 5'-phosphate biosynthesis. Its function is as follows. Catalyzes the formation of pyridoxal 5'-phosphate from ribose 5-phosphate (RBP), glyceraldehyde 3-phosphate (G3P) and ammonia. The ammonia is provided by the PdxT subunit. Can also use ribulose 5-phosphate and dihydroxyacetone phosphate as substrates, resulting from enzyme-catalyzed isomerization of RBP and G3P, respectively. This chain is Pyridoxal 5'-phosphate synthase subunit PdxS, found in Roseiflexus castenholzii (strain DSM 13941 / HLO8).